The chain runs to 668 residues: Metastasis-associated protein MTA2 (668 aa).

A BAH domain is found at 1–144; the sequence is MAANMYRVGD…PVQKTLLADQ (144 aa). A phosphoserine mark is found at serine 52 and serine 54. The ELM2 domain maps to 145–256; that stretch reads GEIRVGCKYQ…KAMSTLVPQG (112 aa). Lysine 152 is modified (N6-acetyllysine). The 53-residue stretch at 263 to 315 folds into the SANT domain; that stretch reads DEMEEWSASEAMLFEEALEKYGKDFNDIRQDFLPWKSLASIVQFYYMWKTTDR. The segment at 367–394 adopts a GATA-type; atypical zinc-finger fold; that stretch reads CESCHTTQSAQWYAWGPPNMQCRLCASC. Positions 409-419 are enriched in polar residues; it reads QLEGATRGTTE. The tract at residues 409-437 is disordered; it reads QLEGATRGTTEPHSRGHLSRPEAQSLSPY. 2 positions are modified to phosphoserine: serine 433 and serine 435. The residue at position 460 (lysine 460) is an N6-acetyllysine. Residue lysine 492 forms a Glycyl lysine isopeptide (Lys-Gly) (interchain with G-Cter in SUMO2 and SUMO3); alternate linkage. Lysine 492 participates in a covalent cross-link: Glycyl lysine isopeptide (Lys-Gly) (interchain with G-Cter in SUMO2); alternate. Lysine 508 participates in a covalent cross-link: Glycyl lysine isopeptide (Lys-Gly) (interchain with G-Cter in SUMO2). N6-acetyllysine occurs at positions 522 and 531. Position 534 is a phosphothreonine (threonine 534). Serine 548 carries the phosphoserine modification. Residues lysine 559 and lysine 595 each participate in a glycyl lysine isopeptide (Lys-Gly) (interchain with G-Cter in SUMO2) cross-link. Disordered regions lie at residues 580–599 and 647–668; these read ASGI…LNPA and PPVP…VLED.

Belongs to the metastasis-associated protein family. In terms of assembly, component of the nucleosome remodeling and deacetylase (NuRD) repressor complex, composed of core proteins MTA1, MTA2, MTA3, RBBP4, RBBP7, HDAC1, HDAC2, MBD2, MBD3, and peripherally associated proteins CDK2AP1, CDK2AP2, GATAD2A, GATAD2B, CHD3, CHD4 and CHD5. The exact stoichiometry of the NuRD complex is unknown, and some subunits such as MBD2 and MBD3, GATAD2A and GATAD2B, and CHD3, CHD4 and CHD5 define mutually exclusive NuRD complexes. Interacts with CHD3. Interacts with CHD4. Interacts with GATAD2A. Interacts with HDAC7. Interacts with MBD3. Interacts with p53/TP53. Interacts with MINT. Interacts with PIMREG. Interacts with NACC2. Interacts with ERCC6. Interacts with PWWP2B. Interacts with transcription factor BCL11A. Widely expressed.

It localises to the nucleus. In terms of biological role, may function as a transcriptional coregulator. Acts as a component of the histone deacetylase NuRD complex which participates in the remodeling of chromatin. This chain is Metastasis-associated protein MTA2 (MTA2), found in Homo sapiens (Human).